Reading from the N-terminus, the 450-residue chain is Probable ECA polymerase (450 aa).

11 helical membrane passes run 6-26, 37-57, 63-83, 118-138, 155-175, 181-201, 207-227, 228-248, 341-361, 378-398, and 410-430; these read FSGL…LTWF, VFFS…TSVL, VGVA…CFYA, VILM…NGFL, GVAL…VYFL, AWLF…MIVG, IIIA…ISLW, MLAA…LKRY, LVVM…GLII, YKAA…IVLA, and VFFI…YWLF.

Belongs to the WzyE family. In terms of assembly, probably part of a complex composed of WzxE, WzyE and WzzE.

It localises to the cell inner membrane. The protein operates within bacterial outer membrane biogenesis; enterobacterial common antigen biosynthesis. Probably involved in the polymerization of enterobacterial common antigen (ECA) trisaccharide repeat units. This Shigella flexneri protein is Probable ECA polymerase.